Here is a 525-residue protein sequence, read N- to C-terminus: GMP synthase [glutamine-hydrolyzing] (525 aa).

Residues 9–207 (RILILDFGSQ…VRDICQCEAL (199 aa)) enclose the Glutamine amidotransferase type-1 domain. Residue C86 is the Nucleophile of the active site. Residues H181 and E183 contribute to the active site. The 193-residue stretch at 208-400 (WTPAKIIDDA…LGLPYDMLYR (193 aa)) folds into the GMPS ATP-PPase domain. Position 235–241 (235–241 (SGGVDSS)) interacts with ATP.

Homodimer.

The enzyme catalyses XMP + L-glutamine + ATP + H2O = GMP + L-glutamate + AMP + diphosphate + 2 H(+). Its pathway is purine metabolism; GMP biosynthesis; GMP from XMP (L-Gln route): step 1/1. Catalyzes the synthesis of GMP from XMP. In Escherichia coli O127:H6 (strain E2348/69 / EPEC), this protein is GMP synthase [glutamine-hydrolyzing].